Consider the following 170-residue polypeptide: Acireductone dioxygenase (170 aa).

Residues His-99, His-101, Glu-105, and His-144 each coordinate Fe(2+). Ni(2+)-binding residues include His-99, His-101, Glu-105, and His-144.

The protein belongs to the acireductone dioxygenase (ARD) family. In terms of assembly, monomer. Requires Fe(2+) as cofactor. Ni(2+) is required as a cofactor.

It carries out the reaction 1,2-dihydroxy-5-(methylsulfanyl)pent-1-en-3-one + O2 = 3-(methylsulfanyl)propanoate + CO + formate + 2 H(+). The enzyme catalyses 1,2-dihydroxy-5-(methylsulfanyl)pent-1-en-3-one + O2 = 4-methylsulfanyl-2-oxobutanoate + formate + 2 H(+). It functions in the pathway amino-acid biosynthesis; L-methionine biosynthesis via salvage pathway; L-methionine from S-methyl-5-thio-alpha-D-ribose 1-phosphate: step 5/6. Its function is as follows. Catalyzes 2 different reactions between oxygen and the acireductone 1,2-dihydroxy-3-keto-5-methylthiopentene (DHK-MTPene) depending upon the metal bound in the active site. Fe-containing acireductone dioxygenase (Fe-ARD) produces formate and 2-keto-4-methylthiobutyrate (KMTB), the alpha-ketoacid precursor of methionine in the methionine recycle pathway. Ni-containing acireductone dioxygenase (Ni-ARD) produces methylthiopropionate, carbon monoxide and formate, and does not lie on the methionine recycle pathway. In Bacillus cereus (strain ATCC 14579 / DSM 31 / CCUG 7414 / JCM 2152 / NBRC 15305 / NCIMB 9373 / NCTC 2599 / NRRL B-3711), this protein is Acireductone dioxygenase.